The primary structure comprises 277 residues: tRNA pseudouridine synthase A (277 aa).

Aspartate 57 serves as the catalytic Nucleophile. Tyrosine 115 contacts substrate.

It belongs to the tRNA pseudouridine synthase TruA family. As to quaternary structure, homodimer.

The catalysed reaction is uridine(38/39/40) in tRNA = pseudouridine(38/39/40) in tRNA. Formation of pseudouridine at positions 38, 39 and 40 in the anticodon stem and loop of transfer RNAs. The polypeptide is tRNA pseudouridine synthase A (Nitratidesulfovibrio vulgaris (strain DSM 19637 / Miyazaki F) (Desulfovibrio vulgaris)).